The primary structure comprises 255 residues: tRNA (guanine-N(7)-)-methyltransferase (255 aa).

The disordered stretch occupies residues 1–35 (MTRTNDASGGGKLPRKRFYRARAHSNPLSDSHFPV). A compositionally biased stretch (basic residues) spans 13–23 (LPRKRFYRARA). S-adenosyl-L-methionine is bound by residues glycine 75, 98-99 (EL), 131-132 (NS), and leucine 151. Aspartate 154 is a catalytic residue. 229–231 (TEE) contacts S-adenosyl-L-methionine.

The protein belongs to the class I-like SAM-binding methyltransferase superfamily. TrmB family.

It is found in the nucleus. It carries out the reaction guanosine(46) in tRNA + S-adenosyl-L-methionine = N(7)-methylguanosine(46) in tRNA + S-adenosyl-L-homocysteine. It participates in tRNA modification; N(7)-methylguanine-tRNA biosynthesis. Catalyzes the formation of N(7)-methylguanine at position 46 (m7G46) in tRNA. This chain is tRNA (guanine-N(7)-)-methyltransferase, found in Zea mays (Maize).